We begin with the raw amino-acid sequence, 300 residues long: ETS homologous factor (300 aa).

The region spanning 29–115 (STCNVSSGFF…SNLQHLKWNG (87 aa)) is the PNT domain. A disordered region spans residues 183 to 202 (ESPDMKKEQDPPAKCHTKKH). Positions 185–195 (PDMKKEQDPPA) are enriched in basic and acidic residues. The ETS DNA-binding region spans 207–289 (THLWEFIRDI…DGRRLVYKFG (83 aa)).

It belongs to the ETS family.

Its subcellular location is the nucleus. In terms of biological role, transcriptional activator that may play a role in regulating epithelial cell differentiation and proliferation. May act as a repressor for a specific subset of ETS/AP-1-responsive genes, and as a modulator of the nuclear response to mitogen-activated protein kinase signaling cascades. Binds to DNA sequences containing the consensus nucleotide core sequence GGAA. Involved in regulation of TNFRSF10B/DR5 expression through Ets-binding sequences on the TNFRSF10B/DR5 promoter. This chain is ETS homologous factor (EHF), found in Pan paniscus (Pygmy chimpanzee).